A 574-amino-acid chain; its full sequence is Laccase-12 (574 aa).

A signal peptide spans 1-27 (MAAASSVLRCCLLVAALMTLSAMGAEA). 2 Plastocyanin-like domains span residues 35 to 151 (DVQT…PPAG) and 161 to 314 (EEVP…YDDP). Residue Asn-81 is glycosylated (N-linked (GlcNAc...) asparagine). Residues His-85, His-87, His-130, and His-132 each contribute to the Cu cation site. N-linked (GlcNAc...) asparagine glycans are attached at residues Asn-173, Asn-190, Asn-206, Asn-242, Asn-302, Asn-335, Asn-342, Asn-381, Asn-388, Asn-398, Asn-434, Asn-441, and Asn-447. The Plastocyanin-like 3 domain occupies 424 to 558 (NFPYYPLNPF…KMAWLVLDGS (135 aa)). 7 residues coordinate Cu cation: His-475, His-478, His-480, His-537, Cys-538, His-539, and His-543.

Belongs to the multicopper oxidase family. Requires Cu cation as cofactor.

Its subcellular location is the secreted. The protein localises to the extracellular space. The protein resides in the apoplast. It catalyses the reaction 4 hydroquinone + O2 = 4 benzosemiquinone + 2 H2O. Functionally, lignin degradation and detoxification of lignin-derived products. This chain is Laccase-12 (LAC12), found in Oryza sativa subsp. japonica (Rice).